The chain runs to 333 residues: Ribosomal RNA small subunit methyltransferase H (333 aa).

S-adenosyl-L-methionine-binding positions include 42–44, D62, F86, D105, and Q112; that span reads GGH.

Belongs to the methyltransferase superfamily. RsmH family.

The protein localises to the cytoplasm. The enzyme catalyses cytidine(1402) in 16S rRNA + S-adenosyl-L-methionine = N(4)-methylcytidine(1402) in 16S rRNA + S-adenosyl-L-homocysteine + H(+). Functionally, specifically methylates the N4 position of cytidine in position 1402 (C1402) of 16S rRNA. This Cupriavidus necator (strain ATCC 17699 / DSM 428 / KCTC 22496 / NCIMB 10442 / H16 / Stanier 337) (Ralstonia eutropha) protein is Ribosomal RNA small subunit methyltransferase H.